We begin with the raw amino-acid sequence, 360 residues long: Phospho-N-acetylmuramoyl-pentapeptide-transferase (360 aa).

10 helical membrane-spanning segments follow: residues Ala-26–Glu-46, Met-74–Gly-94, Tyr-97–Tyr-117, Tyr-134–Asn-154, Val-168–Ser-188, Gly-199–Ser-219, Ser-236–Phe-256, Val-263–Leu-283, Ile-288–Val-308, and Val-338–Lys-358.

The protein belongs to the glycosyltransferase 4 family. MraY subfamily. The cofactor is Mg(2+).

It localises to the cell inner membrane. It catalyses the reaction UDP-N-acetyl-alpha-D-muramoyl-L-alanyl-gamma-D-glutamyl-meso-2,6-diaminopimeloyl-D-alanyl-D-alanine + di-trans,octa-cis-undecaprenyl phosphate = di-trans,octa-cis-undecaprenyl diphospho-N-acetyl-alpha-D-muramoyl-L-alanyl-D-glutamyl-meso-2,6-diaminopimeloyl-D-alanyl-D-alanine + UMP. The protein operates within cell wall biogenesis; peptidoglycan biosynthesis. Functionally, catalyzes the initial step of the lipid cycle reactions in the biosynthesis of the cell wall peptidoglycan: transfers peptidoglycan precursor phospho-MurNAc-pentapeptide from UDP-MurNAc-pentapeptide onto the lipid carrier undecaprenyl phosphate, yielding undecaprenyl-pyrophosphoryl-MurNAc-pentapeptide, known as lipid I. The chain is Phospho-N-acetylmuramoyl-pentapeptide-transferase from Shewanella oneidensis (strain ATCC 700550 / JCM 31522 / CIP 106686 / LMG 19005 / NCIMB 14063 / MR-1).